Consider the following 334-residue polypeptide: Dual specificity mitogen-activated protein kinase kinase 6 (334 aa).

A compositionally biased stretch (basic residues) spans 1-11 (MSQSKGKKRNP). The disordered stretch occupies residues 1 to 34 (MSQSKGKKRNPGLKIPKEAFEQPQTSSTPPRDLD). A d domain region spans residues 4-19 (SKGKKRNPGLKIPKEA). The 262-residue stretch at 53 to 314 (LEPIMELGRG…YPELMQHPFF (262 aa)) folds into the Protein kinase domain. Residues 59–67 (LGRGAYGVV) and lysine 82 each bind ATP. Aspartate 179 serves as the catalytic Proton acceptor. Serine 207 bears the (Microbial infection) O-acetylserine; by Yersinia YopJ; alternate mark. Serine 207 carries the phosphoserine; by MAP3K; alternate modification. Threonine 211 is modified ((Microbial infection) O-acetylthreonine; by Yersinia YopJ; alternate). Threonine 211 is modified (phosphothreonine; by MAP3K; alternate). The segment at 311-334 (HPFFTLHESKGTDVASFVKLILGD) is DVD domain.

Belongs to the protein kinase superfamily. STE Ser/Thr protein kinase family. MAP kinase kinase subfamily. Dimer. Interacts (via its D domain) with its substrates MAPK11, MAPK12, MAPK13 and MAPK14. Interacts (via its DVD domain) with MAP3Ks activators like MAP3K5/ASK1, MAP3K1/MEKK1, MAP3K2/MEKK2, MAP3K3/MEKK3, MAP3K4/MEKK4, MAP3K7/TAK1, MAP3K11/MLK3 and MAP3K17/TAOK2. Interacts with DCTN1. Interacts with EIF2AK2/PKR. As to quaternary structure, (Microbial infection) Interacts with Yersinia YopJ. In terms of processing, weakly autophosphorylated. Phosphorylated at Ser-207 and Thr-211 by the majority of M3Ks, such as MAP3K5/ASK1, MAP3K1/MEKK1, MAP3K2/MEKK2, MAP3K3/MEKK3, MAP3K4/MEKK4, MAP3K7/TAK1, MAP3K11/MLK3 and MAP3K17/TAOK2. Post-translationally, in response to genotoxic stress, MAP3K-phosphorylated MAP2K6 is ubiquitinated and degraded by the SCF(FBXO31) complex. (Microbial infection) Acetylation of Ser-207 and Thr-211 by Yersinia YopJ prevents phosphorylation and activation, thus blocking the MAPK signaling pathway. As to expression, isoform 2 is only expressed in skeletal muscle. Isoform 1 is expressed in skeletal muscle, heart, and in lesser extent in liver or pancreas.

Its subcellular location is the nucleus. It localises to the cytoplasm. The protein resides in the cytoskeleton. The enzyme catalyses L-seryl-[protein] + ATP = O-phospho-L-seryl-[protein] + ADP + H(+). The catalysed reaction is L-threonyl-[protein] + ATP = O-phospho-L-threonyl-[protein] + ADP + H(+). It catalyses the reaction L-tyrosyl-[protein] + ATP = O-phospho-L-tyrosyl-[protein] + ADP + H(+). Activated by dual phosphorylation on Ser-207 and Thr-211 in response to a variety of cellular stresses, including UV radiation, osmotic shock, hypoxia, inflammatory cytokines, interferon gamma (IFNG), and less often by growth factors. MAP2K6/MKK6 is activated by the majority of M3Ks, such as MAP3K5/ASK1, MAP3K1/MEKK1, MAP3K2/MEKK2, MAP3K3/MEKK3, MAP3K4/MEKK4, MAP3K7/TAK1, MAP3K11/MLK3 and MAP3K17/TAOK2. Its function is as follows. Dual specificity protein kinase which acts as an essential component of the MAP kinase signal transduction pathway. With MAP3K3/MKK3, catalyzes the concomitant phosphorylation of a threonine and a tyrosine residue in the MAP kinases p38 MAPK11, MAPK12, MAPK13 and MAPK14 and plays an important role in the regulation of cellular responses to cytokines and all kinds of stresses. Especially, MAP2K3/MKK3 and MAP2K6/MKK6 are both essential for the activation of MAPK11 and MAPK13 induced by environmental stress, whereas MAP2K6/MKK6 is the major MAPK11 activator in response to TNF. MAP2K6/MKK6 also phosphorylates and activates PAK6. The p38 MAP kinase signal transduction pathway leads to direct activation of transcription factors. Nuclear targets of p38 MAP kinase include the transcription factors ATF2 and ELK1. Within the p38 MAPK signal transduction pathway, MAP3K6/MKK6 mediates phosphorylation of STAT4 through MAPK14 activation, and is therefore required for STAT4 activation and STAT4-regulated gene expression in response to IL-12 stimulation. The pathway is also crucial for IL-6-induced SOCS3 expression and down-regulation of IL-6-mediated gene induction; and for IFNG-dependent gene transcription. Has a role in osteoclast differentiation through NF-kappa-B transactivation by TNFSF11, and in endochondral ossification and since SOX9 is another likely downstream target of the p38 MAPK pathway. MAP2K6/MKK6 mediates apoptotic cell death in thymocytes. Acts also as a regulator for melanocytes dendricity, through the modulation of Rho family GTPases. This chain is Dual specificity mitogen-activated protein kinase kinase 6 (MAP2K6), found in Homo sapiens (Human).